Consider the following 274-residue polypeptide: MADEMSEPRRVGFVGAGRMAEAIAQGLIRAGKVEAKQVLASAPTDKNLCHFRALGCQTTHSNHEVLQNCPLVIFATKPQVLPAVLAEVAPVVTTEHIIVSVAAGISLSSMEELLPPKTRVLRVSPNLPCVVQEGAMVMTRGHHAGNEDAKLLQNLLEACGQCIEVPESYVDIHTGLSGSGVAFVCTFSEALAEGAIKMGMPSDLAHRIAAQTLLGTAKMLQQEGKHPAQLRTDVLTPAGTTIHGLHALEQGGFRAAAMSAVEAATCRAKELSKK.

An N-acetylalanine modification is found at Ala-2.

Belongs to the pyrroline-5-carboxylate reductase family. In terms of assembly, homodecamer; composed of 5 homodimers.

Its subcellular location is the cytoplasm. The catalysed reaction is L-proline + NADP(+) = (S)-1-pyrroline-5-carboxylate + NADPH + 2 H(+). It catalyses the reaction L-proline + NAD(+) = (S)-1-pyrroline-5-carboxylate + NADH + 2 H(+). It participates in amino-acid biosynthesis; L-proline biosynthesis; L-proline from L-glutamate 5-semialdehyde: step 1/1. Its function is as follows. Oxidoreductase that catalyzes the last step in proline biosynthesis, which corresponds to the reduction of pyrroline-5-carboxylate (P5C) to L-proline using NAD(P)H. Proline is synthesized from either glutamate or ornithine; both are converted to P5C, and then to proline via pyrroline-5-carboxylate reductases (PYCRs). PYCR3 is exclusively linked to the biosynthesis of proline from ornithine. The sequence is that of Pyrroline-5-carboxylate reductase 3 from Rattus norvegicus (Rat).